The chain runs to 263 residues: Very long chain fatty acid elongase F (263 aa).

7 helical membrane passes run 10–30 (IPVF…LLFV), 55–75 (IFQI…LFVL), 98–118 (LICI…IFFV), 135–155 (FAMA…GVAF), 159–179 (LCLL…LSSI), 193–213 (ITIA…ITLA), and 223–243 (LTYG…QFYY).

This sequence belongs to the ELO family. No expression in adults.

Its subcellular location is the endoplasmic reticulum membrane. It carries out the reaction a very-long-chain acyl-CoA + malonyl-CoA + H(+) = a very-long-chain 3-oxoacyl-CoA + CO2 + CoA. In terms of biological role, condensing enzyme that elongates saturated and monounsaturated very long chain fatty acids, to yield products up to 30 carbons in length. The protein is Very long chain fatty acid elongase F of Drosophila simulans (Fruit fly).